Consider the following 436-residue polypeptide: UPF0761 membrane protein Bxeno_A3061 (436 aa).

6 helical membrane passes run 42 to 62 (LVPL…FASF), 96 to 116 (GLTT…MMTV), 136 to 156 (ILVY…SLSI), 180 to 200 (ALAG…YVYL), 210 to 230 (AVIG…GFGY), and 241 to 261 (VYGA…CWFI).

Belongs to the UPF0761 family.

It localises to the cell inner membrane. This is UPF0761 membrane protein Bxeno_A3061 from Paraburkholderia xenovorans (strain LB400).